The chain runs to 501 residues: Solute carrier family 2, facilitated glucose transporter member 5 (501 aa).

N-acetylmethionine is present on Met-1. Residues 1–17 lie on the Cytoplasmic side of the membrane; the sequence is MEEKHQEETGELTLVLA. The helical transmembrane segment at 18-38 threads the bilayer; the sequence is LATLIAAFGSSFQYGYNVAAV. Residue Tyr-31 participates in D-fructose binding. Residues 39–67 lie on the Extracellular side of the membrane; the sequence is NSPSEFMQQFYNDTYYDRNEENIESFTLT. N-linked (GlcNAc...) asparagine glycosylation occurs at Asn-50. Residues 68 to 90 traverse the membrane as a helical segment; it reads LLWSLTVSMFPFGGFIGSLMVGT. Residues 91 to 97 are Cytoplasmic-facing; the sequence is LVNKLGR. A helical transmembrane segment spans residues 98–118; that stretch reads KGALLFNNIFSILPAILMGCS. The Extracellular segment spans residues 119 to 125; it reads QIAQSFE. Residues 126 to 148 traverse the membrane as a helical segment; it reads LIIISRLLVGICAGISSNVVPMY. The Cytoplasmic portion of the chain corresponds to 149 to 160; that stretch reads LGELAPKNLRGA. Residues 161 to 181 form a helical membrane-spanning segment; the sequence is LGVVPQLFITVGILVAQLFGL. Position 166 (Gln-166) interacts with D-fructose. Over 182–191 the chain is Extracellular; it reads RSLLANEDGW. Residues 192–212 form a helical membrane-spanning segment; that stretch reads PVLLGLTGVPAGLQLLLLPFF. Residues 213–276 are Cytoplasmic-facing; sequence PESPRYLLIQ…LFTMQSLRWQ (64 aa). Residues 277–297 traverse the membrane as a helical segment; the sequence is LISMIVLMAGQQLSGVNAIYY. D-fructose-binding positions include Gln-287 and 295–297; that span reads IYY. The Extracellular segment spans residues 298–312; that stretch reads YADQIYLSAGVKSDD. A helical membrane pass occupies residues 313–333; that stretch reads VQYVTAGTGAVNVFMTILTIF. At 334-341 the chain is on the cytoplasmic side; it reads VVELWGRR. The chain crosses the membrane as a helical span at residues 342-362; the sequence is FLLLVGFSTCLIACLVLTAAL. Topologically, residues 363 to 370 are extracellular; the sequence is ALQNTISW. Residues 371–393 traverse the membrane as a helical segment; it reads MPYISIVCVIVYVIGHALGPSPI. Residue His-386 participates in D-fructose binding. Topologically, residues 394–411 are cytoplasmic; it reads PALLITEIFLQSSRPAAY. Residues 412 to 432 form a helical membrane-spanning segment; the sequence is MIGGSVHWLSNFTVGLIFPFI. 418 to 419 is a binding site for D-fructose; it reads HW. The Extracellular portion of the chain corresponds to 433–438; sequence QMGLGP. A helical transmembrane segment spans residues 439–459; sequence YSFIIFATICFLTTIYIFMVV. Topologically, residues 460–501 are cytoplasmic; it reads PETKGRTFIEINQIFTMKNKVSDVYPKKEEELGALPHAILEQ.

The protein belongs to the major facilitator superfamily. Sugar transporter (TC 2.A.1.1) family. Glucose transporter subfamily. Detected at the apical membrane of villi in the jejunum. Detected in jejunum mucosa. Detected in epididymis and whole testis (at protein level). Detected in small intestine, kidney and testis. Detected in cochlea, but not in inner or outer cochlear hair cells.

The protein localises to the apical cell membrane. It localises to the cell membrane. The protein resides in the sarcolemma. It carries out the reaction D-fructose(out) = D-fructose(in). With respect to regulation, fructose uptake is inhibited by cytochalasin B. Functions as a fructose transporter that has only low activity with other monosaccharides. Can mediate the uptake of deoxyglucose, but with low efficiency. Essential for fructose uptake in the small intestine. Plays a role in the regulation of salt uptake and blood pressure in response to dietary fructose. Required for the development of high blood pressure in response to high dietary fructose intake. The chain is Solute carrier family 2, facilitated glucose transporter member 5 from Mus musculus (Mouse).